The following is a 356-amino-acid chain: tRNA N6-adenosine threonylcarbamoyltransferase (356 aa).

Fe cation contacts are provided by H115 and H119. Residues 138–142, D171, G184, and N283 each bind substrate; that span reads LVSGG. D311 provides a ligand contact to Fe cation.

The protein belongs to the KAE1 / TsaD family. The cofactor is Fe(2+).

It localises to the cytoplasm. The enzyme catalyses L-threonylcarbamoyladenylate + adenosine(37) in tRNA = N(6)-L-threonylcarbamoyladenosine(37) in tRNA + AMP + H(+). Functionally, required for the formation of a threonylcarbamoyl group on adenosine at position 37 (t(6)A37) in tRNAs that read codons beginning with adenine. Is involved in the transfer of the threonylcarbamoyl moiety of threonylcarbamoyl-AMP (TC-AMP) to the N6 group of A37, together with TsaE and TsaB. TsaD likely plays a direct catalytic role in this reaction. The protein is tRNA N6-adenosine threonylcarbamoyltransferase of Prochlorococcus marinus (strain MIT 9515).